The chain runs to 315 residues: Cysteine synthase (315 aa).

Positions 8 and 35 each coordinate hydrogen sulfide. Residue Lys-42 is modified to N6-(pyridoxal phosphate)lysine. Pyridoxal 5'-phosphate contacts are provided by residues Asn-72 and 177 to 181 (GTGGT). Leu-269 contacts hydrogen sulfide. Ser-273 contributes to the pyridoxal 5'-phosphate binding site.

The protein belongs to the cysteine synthase/cystathionine beta-synthase family. In terms of assembly, homodimer. It depends on pyridoxal 5'-phosphate as a cofactor.

The enzyme catalyses O-acetyl-L-serine + hydrogen sulfide = L-cysteine + acetate. It participates in amino-acid biosynthesis; L-cysteine biosynthesis; L-cysteine from L-serine: step 2/2. The polypeptide is Cysteine synthase (cysK) (Buchnera aphidicola subsp. Acyrthosiphon pisum (strain APS) (Acyrthosiphon pisum symbiotic bacterium)).